A 342-amino-acid chain; its full sequence is L-threonine 3-dehydrogenase (342 aa).

Cys39 contributes to the Zn(2+) binding site. Catalysis depends on charge relay system residues Thr41 and His44. His64, Glu65, Cys94, Cys97, Cys100, and Cys108 together coordinate Zn(2+). NAD(+) is bound by residues Ile176, Asp196, Arg201, 263–265, and 287–288; these read LGI and IY.

This sequence belongs to the zinc-containing alcohol dehydrogenase family. In terms of assembly, homotetramer. Requires Zn(2+) as cofactor.

It localises to the cytoplasm. The catalysed reaction is L-threonine + NAD(+) = (2S)-2-amino-3-oxobutanoate + NADH + H(+). Its pathway is amino-acid degradation; L-threonine degradation via oxydo-reductase pathway; glycine from L-threonine: step 1/2. Catalyzes the NAD(+)-dependent oxidation of L-threonine to 2-amino-3-ketobutyrate. The chain is L-threonine 3-dehydrogenase from Protochlamydia amoebophila (strain UWE25).